The chain runs to 1513 residues: DNA-directed RNA polymerase subunit beta'' (1513 aa).

Positions 220, 296, 303, and 306 each coordinate Zn(2+). Positions 644–769 are disordered; sequence RTREKDSENE…EYGNPEEDSV (126 aa). The span at 659–679 shows a compositional bias: basic and acidic residues; that stretch reads NEYRTREEECKTLEDEYRTRE. Acidic residues predominate over residues 680–707; that stretch reads EEYETLEDEYGIPENEYETLEDEYGILE. The span at 726-737 shows a compositional bias: basic and acidic residues; the sequence is NKYRPREDKYGT. Residues 738-767 are compositionally biased toward acidic residues; it reads LEEDSEDEHGTLEEDSEEDSEDEYGNPEED.

It belongs to the RNA polymerase beta' chain family. RpoC2 subfamily. As to quaternary structure, in plastids the minimal PEP RNA polymerase catalytic core is composed of four subunits: alpha, beta, beta', and beta''. When a (nuclear-encoded) sigma factor is associated with the core the holoenzyme is formed, which can initiate transcription. Zn(2+) serves as cofactor.

Its subcellular location is the plastid. It is found in the chloroplast. It catalyses the reaction RNA(n) + a ribonucleoside 5'-triphosphate = RNA(n+1) + diphosphate. Its function is as follows. DNA-dependent RNA polymerase catalyzes the transcription of DNA into RNA using the four ribonucleoside triphosphates as substrates. The protein is DNA-directed RNA polymerase subunit beta'' of Oryza nivara (Indian wild rice).